The sequence spans 451 residues: 12S seed storage protein CRD (451 aa).

The signal sequence occupies residues 1–25; sequence MHKLLFSLLSVVSLSFLLFFHGAEA. Cystine bridges form between Cys36–Cys69 and Cys112–Cys277. Ser39 is modified (phosphoserine). 2 Cupin type-1 domains span residues 42-234 and 283-432; these read NSLA…ETAK and ENID…EEAK. Position 115 is a phosphothreonine (Thr115). Ser302 is modified (phosphoserine). Thr396 is subject to Phosphothreonine. Ser437 carries the phosphoserine modification.

Belongs to the 11S seed storage protein (globulins) family. As to quaternary structure, hexamer; each subunit is composed of an acidic and a basic chain derived from a single precursor and linked by a disulfide bond. Post-translationally, ubiquitinated. Proteolytically processed during seed maturation at a conserved Asn-Gly peptide bond by an asparaginyl endopeptidase to produce two mature polypeptides referred to as alpha and beta subunits that are joined together by a disulfide bond. In terms of processing, phosphorylated in seeds on some Tyr residues in response to abscisic acid (ABA). In terms of tissue distribution, accumulates in seeds 8 days after anthesis.

It is found in the protein storage vacuole. In terms of biological role, seed storage protein. The polypeptide is 12S seed storage protein CRD (CRD) (Arabidopsis thaliana (Mouse-ear cress)).